The primary structure comprises 94 residues: Co-chaperonin GroES (94 aa).

This sequence belongs to the GroES chaperonin family. As to quaternary structure, heptamer of 7 subunits arranged in a ring. Interacts with the chaperonin GroEL.

The protein localises to the cytoplasm. In terms of biological role, together with the chaperonin GroEL, plays an essential role in assisting protein folding. The GroEL-GroES system forms a nano-cage that allows encapsulation of the non-native substrate proteins and provides a physical environment optimized to promote and accelerate protein folding. GroES binds to the apical surface of the GroEL ring, thereby capping the opening of the GroEL channel. The protein is Co-chaperonin GroES of Lactococcus lactis subsp. cremoris (strain SK11).